A 391-amino-acid polypeptide reads, in one-letter code: Phosphoglycerate kinase (391 aa).

Substrate contacts are provided by residues 21–23, arginine 36, 59–62, arginine 113, and arginine 146; these read DFN and HLGR. ATP is bound by residues lysine 197, glutamate 319, and 345 to 348; that span reads GGDT.

It belongs to the phosphoglycerate kinase family. Monomer.

The protein localises to the cytoplasm. The enzyme catalyses (2R)-3-phosphoglycerate + ATP = (2R)-3-phospho-glyceroyl phosphate + ADP. The protein operates within carbohydrate degradation; glycolysis; pyruvate from D-glyceraldehyde 3-phosphate: step 2/5. This is Phosphoglycerate kinase from Methylococcus capsulatus (strain ATCC 33009 / NCIMB 11132 / Bath).